Reading from the N-terminus, the 124-residue chain is UPF0482 protein YPK_1977 (124 aa).

Positions 1–32 are cleaved as a signal peptide; sequence MMKINNLPRLIRAFLPATLLMLPLVWQTPALA. The disordered stretch occupies residues 47 to 69; the sequence is GGNNDPMSKEQARQSQQQWDETN.

The protein belongs to the UPF0482 family.

This chain is UPF0482 protein YPK_1977, found in Yersinia pseudotuberculosis serotype O:3 (strain YPIII).